Here is a 1248-residue protein sequence, read N- to C-terminus: Kinesin-like protein KIN-14I (1248 aa).

Positions 88-244 constitute a MyTH4 domain; it reads FQKDPIPTSL…PAREEIEALL (157 aa). Residues 249–563 form the FERM domain; the sequence is LTTIVFFLDE…HINDVMLRRY (315 aa). Residues 586–659 adopt a coiled-coil conformation; sequence NIEIYEKRVQ…LDKLKSLCDE (74 aa). Residues 675-704 are disordered; that stretch reads ETRLKSGQGQESSNRTGVSGNHFERDTLPT. Over residues 679–693 the composition is skewed to polar residues; the sequence is KSGQGQESSNRTGVS. A coiled-coil region spans residues 708–799; that stretch reads VNNSIEMLAK…TRSLNVTEST (92 aa). The 322-residue stretch at 872-1193 folds into the Kinesin motor domain; sequence KIRVFCRLRP…LMYASRVRCI (322 aa). 953 to 960 is a binding site for ATP; sequence GQTGSGKT. The calmodulin-binding stretch occupies residues 1201–1223; the sequence is VAPKEIMRLKKLIAYWKEQAGKR. The segment at 1220-1248 is disordered; the sequence is AGKRSEDDDLEEIQEERTPKEKADNRLTS. The segment covering 1234–1248 has biased composition (basic and acidic residues); it reads EERTPKEKADNRLTS.

Belongs to the TRAFAC class myosin-kinesin ATPase superfamily. Kinesin family. KIN-14 subfamily. Binds microtubules via its N-terminus containing the MyTH4 domain and binds F-actin via its FERM domain. Binding to calmodulin inhibits microtubule binding activity.

Its subcellular location is the cytoplasm. The protein resides in the cytoskeleton. Minus-end microtubule-dependent motor protein involved in the regulation of cell division. The polypeptide is Kinesin-like protein KIN-14I (Oryza sativa subsp. japonica (Rice)).